A 448-amino-acid chain; its full sequence is MPGIKRILTVTILALCLPSPGNAQAQCTNGFDLDRQSGQCLDIDECRTIPEACRGDMMCVNQNGGYLCIPRTNPVYRGPYSNPYSTPYSGPYPAAAPPLSAPNYPTISRPLICRFGYQMDESNQCVDVDECATDSHQCNPTQICINTEGGYTCSCTDGYWLLEGQCLDIDECRYGYCQQLCANVPGSYSCTCNPGFTLNEDGRSCQDVNECATENPCVQTCVNTYGSFICRCDPGYELEEDGVHCSDMDECSFSEFLCQHECVNQPGTYFCSCPPGYILLDDNRSCQDINECEHRNHTCNLQQTCYNLQGGFKCIDPIRCEEPYLRISDNRCMCPAENPGCRDQPFTILYRDMDVVSGRSVPADIFQMQATTRYPGAYYIFQIKSGNEGREFYMRQTGPISATLVMTRPIKGPREIQLDLEMITVNTVINFRGSSVIRLRIYVSQYPF.

Positions 1–23 (MPGIKRILTVTILALCLPSPGNA) are cleaved as a signal peptide. The 41-residue stretch at 42–82 (DIDECRTIPEACRGDMMCVNQNGGYLCIPRTNPVYRGPYSN) folds into the EGF-like 1; calcium-binding domain. 17 cysteine pairs are disulfide-bonded: Cys46-Cys59, Cys53-Cys68, Cys131-Cys144, Cys138-Cys153, Cys155-Cys166, Cys172-Cys181, Cys177-Cys190, Cys192-Cys205, Cys211-Cys221, Cys217-Cys230, Cys232-Cys245, Cys251-Cys262, Cys258-Cys271, Cys273-Cys286, Cys292-Cys305, Cys299-Cys314, and Cys320-Cys332. The Cell attachment site signature appears at 54-56 (RGD). Residues 127–167 (DVDECATDSHQCNPTQICINTEGGYTCSCTDGYWLLEGQCL) form the EGF-like 2; calcium-binding domain. An EGF-like 3; calcium-binding domain is found at 168–206 (DIDECRYGYCQQLCANVPGSYSCTCNPGFTLNEDGRSCQ). In terms of domain architecture, EGF-like 4; calcium-binding spans 207–246 (DVNECATENPCVQTCVNTYGSFICRCDPGYELEEDGVHCS). The interaction with LOXL1 stretch occupies residues 245 to 448 (CSDMDECSFS…LRIYVSQYPF (204 aa)). The EGF-like 5; calcium-binding domain occupies 247 to 287 (DMDECSFSEFLCQHECVNQPGTYFCSCPPGYILLDDNRSCQ). Residues Asn283 and Asn296 are each glycosylated (N-linked (GlcNAc...) asparagine). The EGF-like 6; calcium-binding domain occupies 288 to 333 (DINECEHRNHTCNLQQTCYNLQGGFKCIDPIRCEEPYLRISDNRCM).

It belongs to the fibulin family. As to quaternary structure, homodimer. Monomer, homodimerizes in presence of Ca(2+). Interacts with ELN. Interacts (via N-terminus) with the integrins ITGAV/ITGB3, ITGAV/ITGB5 and ITGA9/ITGB1. Interacts with FBN1 (via N-terminal domain). Forms a ternary complex with ELN and FBN1. Interacts with EFEMP2 with moderate affinity. Interacts with LOXL1. In terms of processing, N-glycosylated. In terms of tissue distribution, expressed in skin fibroblasts (at protein level). Expressed predominantly in heart, ovary, and colon but also in kidney, pancreas, testis, lung and placenta. Not detectable in brain, liver, thymus, prostate, or peripheral blood leukocytes.

It is found in the secreted. The protein localises to the extracellular space. Its subcellular location is the extracellular matrix. Functionally, essential for elastic fiber formation, is involved in the assembly of continuous elastin (ELN) polymer and promotes the interaction of microfibrils and ELN. Stabilizes and organizes elastic fibers in the skin, lung and vasculature. Promotes adhesion of endothelial cells through interaction of integrins and the RGD motif. Vascular ligand for integrin receptors which may play a role in vascular development and remodeling. May act as an adapter that mediates the interaction between FBN1 and ELN. The chain is Fibulin-5 (FBLN5) from Homo sapiens (Human).